A 327-amino-acid polypeptide reads, in one-letter code: Aldo-keto reductase family 7 member A3 (327 aa).

Position 2 is a phosphoserine (S2). M13, R18, and D40 together coordinate NADP(+). Catalysis depends on Y45, which acts as the Proton donor. H109 contributes to the citrate binding site. N140, N194, L196, G198, R204, and R218 together coordinate NADP(+). Citrate contacts are provided by Y228 and R231. 5 residues coordinate NADP(+): S286, Q290, Q293, N294, and R327.

This sequence belongs to the aldo/keto reductase family. Aldo/keto reductase 2 subfamily. As to quaternary structure, homodimer. Heterodimer with AKR7A2.

The protein resides in the cytoplasm. The enzyme catalyses a primary alcohol + NADP(+) = an aldehyde + NADPH + H(+). It carries out the reaction aflatoxin B1 dialdehyde + NADPH + H(+) = aflatoxin B1 C(6a)-monoaldehyde + NADP(+). The catalysed reaction is aflatoxin B1 dialdehyde + NADPH + H(+) = aflatoxin B1 C(8)-monoaldehyde + NADP(+). It catalyses the reaction aflatoxin B1 C(6a)-monoaldehyde + NADPH + 2 H(+) = aflatoxin B1 triol + NADP(+). With respect to regulation, inhibited by citrate. Its function is as follows. Catalyzes the NADPH-dependent reduction of various carbonyl-containing compounds, including aldehydes, ketones, and toxic products from cellular metabolism or environmental exposure. Can reduce the dialdehyde form of aflatoxin B1 (AFB1) into alcohol derivatives, via monoaldehydes intermediates, thus preventing the formation of protein adducts that contribute to AFB1-induced toxicity. The sequence is that of Aldo-keto reductase family 7 member A3 from Rattus norvegicus (Rat).